The primary structure comprises 284 residues: Bifunctional protein FolD (284 aa).

Residue 166–168 (GAS) coordinates NADP(+).

Belongs to the tetrahydrofolate dehydrogenase/cyclohydrolase family. As to quaternary structure, homodimer.

It catalyses the reaction (6R)-5,10-methylene-5,6,7,8-tetrahydrofolate + NADP(+) = (6R)-5,10-methenyltetrahydrofolate + NADPH. The catalysed reaction is (6R)-5,10-methenyltetrahydrofolate + H2O = (6R)-10-formyltetrahydrofolate + H(+). It participates in one-carbon metabolism; tetrahydrofolate interconversion. In terms of biological role, catalyzes the oxidation of 5,10-methylenetetrahydrofolate to 5,10-methenyltetrahydrofolate and then the hydrolysis of 5,10-methenyltetrahydrofolate to 10-formyltetrahydrofolate. The chain is Bifunctional protein FolD from Legionella pneumophila subsp. pneumophila (strain Philadelphia 1 / ATCC 33152 / DSM 7513).